We begin with the raw amino-acid sequence, 120 residues long: NAD(P)H-quinone oxidoreductase subunit 3, chloroplastic (120 aa).

The next 3 membrane-spanning stretches (helical) occupy residues 9 to 29 (IFWAFLIISSLIPILVFFISG), 64 to 84 (MFALVFVVFDVETVFLYPWAM), and 88 to 108 (VLGVSVFVEALIFVLILIVGL).

Belongs to the complex I subunit 3 family. In terms of assembly, NDH is composed of at least 16 different subunits, 5 of which are encoded in the nucleus.

The protein resides in the plastid. It is found in the chloroplast thylakoid membrane. The catalysed reaction is a plastoquinone + NADH + (n+1) H(+)(in) = a plastoquinol + NAD(+) + n H(+)(out). The enzyme catalyses a plastoquinone + NADPH + (n+1) H(+)(in) = a plastoquinol + NADP(+) + n H(+)(out). Functionally, NDH shuttles electrons from NAD(P)H:plastoquinone, via FMN and iron-sulfur (Fe-S) centers, to quinones in the photosynthetic chain and possibly in a chloroplast respiratory chain. The immediate electron acceptor for the enzyme in this species is believed to be plastoquinone. Couples the redox reaction to proton translocation, and thus conserves the redox energy in a proton gradient. In Guizotia abyssinica (Niger), this protein is NAD(P)H-quinone oxidoreductase subunit 3, chloroplastic.